We begin with the raw amino-acid sequence, 313 residues long: Aspartate carbamoyltransferase catalytic subunit (313 aa).

Positions 55 and 56 each coordinate carbamoyl phosphate. K83 contacts L-aspartate. Residues R105, H138, and Q141 each contribute to the carbamoyl phosphate site. Residues R171 and R225 each coordinate L-aspartate. G266 and P267 together coordinate carbamoyl phosphate.

It belongs to the aspartate/ornithine carbamoyltransferase superfamily. ATCase family. Heterododecamer (2C3:3R2) of six catalytic PyrB chains organized as two trimers (C3), and six regulatory PyrI chains organized as three dimers (R2).

The catalysed reaction is carbamoyl phosphate + L-aspartate = N-carbamoyl-L-aspartate + phosphate + H(+). It participates in pyrimidine metabolism; UMP biosynthesis via de novo pathway; (S)-dihydroorotate from bicarbonate: step 2/3. Its function is as follows. Catalyzes the condensation of carbamoyl phosphate and aspartate to form carbamoyl aspartate and inorganic phosphate, the committed step in the de novo pyrimidine nucleotide biosynthesis pathway. The polypeptide is Aspartate carbamoyltransferase catalytic subunit (Corynebacterium diphtheriae (strain ATCC 700971 / NCTC 13129 / Biotype gravis)).